The chain runs to 163 residues: Lectin-like protein EP153R (163 aa).

Residues 1–26 (MFSNKKYIGLINKKEGLKKKIDDYSI) lie on the Cytoplasmic side of the membrane. The helical transmembrane segment at 27 to 47 (LIIGILIGTNILSLIINIIGE) threads the bilayer. Over 48–163 (INKPICYQNN…YTDLLFICSK (116 aa)) the chain is Extracellular. Cys63 and Cys74 form a disulfide bridge. Residues 63-162 (CPKDWVGYNN…HYTDLLFICS (100 aa)) form a lectin-like region. N-linked (GlcNAc...) asparagine; by host glycosylation is found at Asn84, Asn96, Asn97, Asn103, Asn109, Asn115, Asn129, and Asn135. An intrachain disulfide couples Cys92 to Cys161.

This sequence belongs to the asfivirus lectin-like protein family. In terms of assembly, homodimer.

Its subcellular location is the host endoplasmic reticulum membrane. Its function is as follows. Down-regulates MHC-I expression by impairing the appropriate configuration or presentation into the plasma membrane of the latter. Participates in viral hemadsorption, which may help viral spread. Reduces the transactivating activity of host TP53, thus inhibiting apoptosis. Non-essential for virus growth in swine macrophage cell cultures. The protein is Lectin-like protein EP153R of African swine fever virus (isolate Warthog/Namibia/Wart80/1980) (ASFV).